Reading from the N-terminus, the 425-residue chain is UDP-N-acetylglucosamine 1-carboxyvinyltransferase (425 aa).

A phosphoenolpyruvate-binding site is contributed by 22–23; sequence KN. Arg93 is a binding site for UDP-N-acetyl-alpha-D-glucosamine. Cys117 functions as the Proton donor in the catalytic mechanism. At Cys117 the chain carries 2-(S-cysteinyl)pyruvic acid O-phosphothioketal. Residues 122–126, 162–165, Asp307, and Ile329 contribute to the UDP-N-acetyl-alpha-D-glucosamine site; these read RPVDL and KVSV.

It belongs to the EPSP synthase family. MurA subfamily.

It localises to the cytoplasm. It catalyses the reaction phosphoenolpyruvate + UDP-N-acetyl-alpha-D-glucosamine = UDP-N-acetyl-3-O-(1-carboxyvinyl)-alpha-D-glucosamine + phosphate. It functions in the pathway cell wall biogenesis; peptidoglycan biosynthesis. Cell wall formation. Adds enolpyruvyl to UDP-N-acetylglucosamine. This is UDP-N-acetylglucosamine 1-carboxyvinyltransferase from Pasteurella multocida (strain Pm70).